The chain runs to 267 residues: Putative B3 domain-containing protein LOC_Os07g12820 (267 aa).

Residues 4–99 (PTFSMVKIKT…RLNVIIFNKE (96 aa)) constitute a DNA-binding region (TF-B3).

The protein resides in the nucleus. This Oryza sativa subsp. japonica (Rice) protein is Putative B3 domain-containing protein LOC_Os07g12820.